Consider the following 839-residue polypeptide: Protein translocase subunit SecA (839 aa).

ATP is bound by residues Gln-85, 103 to 107 (GEGKT), and Asp-493. Over residues 780-790 (QIHEQERERAS) the composition is skewed to basic and acidic residues. Positions 780–839 (QIHEQERERASQRATTAAPQNIQSQQSANTDDLPKVERNEACPCGSGKKFKNCHGRKSFS) are disordered. Positions 791–809 (QRATTAAPQNIQSQQSANT) are enriched in polar residues. Zn(2+) contacts are provided by Cys-821, Cys-823, Cys-832, and His-833. The span at 827-839 (KKFKNCHGRKSFS) shows a compositional bias: basic residues.

Belongs to the SecA family. As to quaternary structure, monomer and homodimer. Part of the essential Sec protein translocation apparatus which comprises SecA, SecYEG and auxiliary proteins SecDF. Other proteins may also be involved. Zn(2+) serves as cofactor.

It localises to the cell membrane. Its subcellular location is the cytoplasm. The enzyme catalyses ATP + H2O + cellular proteinSide 1 = ADP + phosphate + cellular proteinSide 2.. Functionally, part of the Sec protein translocase complex. Interacts with the SecYEG preprotein conducting channel. Has a central role in coupling the hydrolysis of ATP to the transfer of proteins into and across the cell membrane, serving as an ATP-driven molecular motor driving the stepwise translocation of polypeptide chains across the membrane. This Streptococcus pyogenes serotype M3 (strain ATCC BAA-595 / MGAS315) protein is Protein translocase subunit SecA.